A 204-amino-acid polypeptide reads, in one-letter code: ATP phosphoribosyltransferase (204 aa).

It belongs to the ATP phosphoribosyltransferase family. Short subfamily. Heteromultimer composed of HisG and HisZ subunits.

The protein resides in the cytoplasm. It catalyses the reaction 1-(5-phospho-beta-D-ribosyl)-ATP + diphosphate = 5-phospho-alpha-D-ribose 1-diphosphate + ATP. Its pathway is amino-acid biosynthesis; L-histidine biosynthesis; L-histidine from 5-phospho-alpha-D-ribose 1-diphosphate: step 1/9. Functionally, catalyzes the condensation of ATP and 5-phosphoribose 1-diphosphate to form N'-(5'-phosphoribosyl)-ATP (PR-ATP). Has a crucial role in the pathway because the rate of histidine biosynthesis seems to be controlled primarily by regulation of HisG enzymatic activity. This is ATP phosphoribosyltransferase from Staphylococcus epidermidis (strain ATCC 35984 / DSM 28319 / BCRC 17069 / CCUG 31568 / BM 3577 / RP62A).